The chain runs to 832 residues: Mucosa-associated lymphoid tissue lymphoma translocation protein 1 homolog (832 aa).

The tract at residues 1 to 39 (MSLWGQPLQASPPLAVRQPPTASSGPSTSPPAGATLNRL) is disordered. The residue at position 2 (Ser-2) is an N-acetylserine. Over residues 19-39 (PPTASSGPSTSPPAGATLNRL) the composition is skewed to low complexity. A Death domain is found at 45-132 (RRLSESLDRA…EVLPLLNPPG (88 aa)). Ig-like C2-type domains are found at residues 131 to 207 (PGLK…FEFS) and 218 to 314 (AEVT…KKAE). A Phosphoserine modification is found at Ser-141. Disulfide bonds link Cys-154–Cys-196 and Cys-257–Cys-299. A caspase-like region spans residues 356 to 570 (IGNMSYWEHP…SLSEKRALTD (215 aa)). A Nuclear export signal motif is present at residues 377–384 (LTNLLRQL). Residues His-423 and Cys-472 contribute to the active site.

This sequence belongs to the peptidase C14B family. Homooligomer; forms oligomers which bind to TRAF6. Forms a complex with CARD14 and MALT1; resulting in the formation of a CBM (CARD14-BCL10-MALT1) complex. Forms a complex with CARD11 and MALT1; resulting in the formation of a CBM (CARD11-BCL10-MALT1) complex. Forms a complex with CARD9 and MALT1; resulting in the formation of a CBM (CARD9-BCL10-MALT1) complex.

The protein resides in the cytoplasm. It is found in the perinuclear region. Its subcellular location is the nucleus. In terms of biological role, protease that enhances BCL10-induced activation: acts via formation of CBM complexes that channel adaptive and innate immune signaling downstream of CARD domain-containing proteins (CARD9, CARD11 and CARD14) to activate NF-kappa-B and MAP kinase p38 pathways which stimulate expression of genes encoding pro-inflammatory cytokines and chemokines. Mediates BCL10 cleavage: MALT1-dependent BCL10 cleavage plays an important role in T-cell antigen receptor-induced integrin adhesion. Involved in the induction of T helper 17 cells (Th17) differentiation. Cleaves RC3H1 and ZC3H12A in response to T-cell receptor (TCR) stimulation which releases their cooperatively repressed targets to promote Th17 cell differentiation. Also mediates cleavage of N4BP1 in T-cells following TCR-mediated activation, leading to N4BP1 inactivation. May also have ubiquitin ligase activity: binds to TRAF6, inducing TRAF6 oligomerization and activation of its ligase activity. This chain is Mucosa-associated lymphoid tissue lymphoma translocation protein 1 homolog, found in Mus musculus (Mouse).